A 487-amino-acid polypeptide reads, in one-letter code: 3-octaprenyl-4-hydroxybenzoate carboxy-lyase (487 aa).

Asn-172 contacts Mn(2+). Residues Ile-175–Arg-177, Arg-189–Leu-191, and Arg-194–Gly-195 each bind prenylated FMN. Residue Glu-238 coordinates Mn(2+). Asp-287 serves as the catalytic Proton donor.

This sequence belongs to the UbiD family. Homohexamer. Prenylated FMN is required as a cofactor. The cofactor is Mn(2+).

The protein localises to the cell membrane. It carries out the reaction a 4-hydroxy-3-(all-trans-polyprenyl)benzoate + H(+) = a 2-(all-trans-polyprenyl)phenol + CO2. It functions in the pathway cofactor biosynthesis; ubiquinone biosynthesis. Functionally, catalyzes the decarboxylation of 3-octaprenyl-4-hydroxy benzoate to 2-octaprenylphenol, an intermediate step in ubiquinone biosynthesis. The protein is 3-octaprenyl-4-hydroxybenzoate carboxy-lyase of Actinobacillus pleuropneumoniae serotype 5b (strain L20).